The following is a 738-amino-acid chain: Wall-associated receptor kinase 4 (738 aa).

Residues 1-22 form the signal peptide; the sequence is MKVQRLFLVAIFCLSYMQLVKG. Residues 23 to 335 are Extracellular-facing; sequence QTLPRCPEKC…PKGNPEYVEW (313 aa). Residues Asn-34, Asn-56, Asn-109, Asn-115, Asn-132, Asn-182, and Asn-208 are each glycosylated (N-linked (GlcNAc...) asparagine). The region spanning 232 to 278 is the EGF-like 1 domain; that stretch reads RGETCGQVGEKKCGVNGICSNSASGIGYTCKCKGGFQGNPYLQNGCQ. Cystine bridges form between Cys-236/Cys-250, Cys-244/Cys-261, Cys-263/Cys-277, Cys-283/Cys-300, Cys-294/Cys-309, and Cys-311/Cys-324. The EGF-like 2; calcium-binding domain maps to 279 to 325; it reads DINECTTANPIHKHNCSGDSTCENKLGHFRCNCRSRYELNTTTNTCK. Asn-293 is a glycosylation site (N-linked (GlcNAc...) asparagine). Asn-318 carries an N-linked (GlcNAc...) asparagine glycan. The chain crosses the membrane as a helical span at residues 336–356; the sequence is TTIVLGTTIGFLVILLAISCI. Topologically, residues 357-738 are cytoplasmic; sequence EHKMKNTKDT…VAILDIEAGR (382 aa). At Thr-399 the chain carries Phosphothreonine. Residues 410 to 693 form the Protein kinase domain; that stretch reads YDENRILGQG…RVTKTKHKWS (284 aa). Residues 416–424 and Lys-438 each bind ATP; that span reads LGQGGQGTV. Tyr-483 bears the Phosphotyrosine mark. Asp-535 serves as the catalytic Proton acceptor. Thr-569 and Thr-574 each carry phosphothreonine. The residue at position 582 (Tyr-582) is a Phosphotyrosine.

The protein belongs to the protein kinase superfamily. Ser/Thr protein kinase family. As to expression, strictly expressed in siliques.

The protein localises to the membrane. It carries out the reaction L-seryl-[protein] + ATP = O-phospho-L-seryl-[protein] + ADP + H(+). The catalysed reaction is L-threonyl-[protein] + ATP = O-phospho-L-threonyl-[protein] + ADP + H(+). Its function is as follows. Serine/threonine-protein kinase that may function as a signaling receptor of extracellular matrix component. Binding to pectin may have significance in the control of cell expansion, morphogenesis and development. The protein is Wall-associated receptor kinase 4 (WAK4) of Arabidopsis thaliana (Mouse-ear cress).